Consider the following 200-residue polypeptide: Holliday junction branch migration complex subunit RuvA (200 aa).

The segment at Met1–Ala63 is domain I. The domain II stretch occupies residues Asp64–Ala142. The interval Gly143–Glu151 is flexible linker. The tract at residues Glu151–Arg200 is domain III.

It belongs to the RuvA family. Homotetramer. Forms an RuvA(8)-RuvB(12)-Holliday junction (HJ) complex. HJ DNA is sandwiched between 2 RuvA tetramers; dsDNA enters through RuvA and exits via RuvB. An RuvB hexamer assembles on each DNA strand where it exits the tetramer. Each RuvB hexamer is contacted by two RuvA subunits (via domain III) on 2 adjacent RuvB subunits; this complex drives branch migration. In the full resolvosome a probable DNA-RuvA(4)-RuvB(12)-RuvC(2) complex forms which resolves the HJ.

Its subcellular location is the cytoplasm. The RuvA-RuvB-RuvC complex processes Holliday junction (HJ) DNA during genetic recombination and DNA repair, while the RuvA-RuvB complex plays an important role in the rescue of blocked DNA replication forks via replication fork reversal (RFR). RuvA specifically binds to HJ cruciform DNA, conferring on it an open structure. The RuvB hexamer acts as an ATP-dependent pump, pulling dsDNA into and through the RuvAB complex. HJ branch migration allows RuvC to scan DNA until it finds its consensus sequence, where it cleaves and resolves the cruciform DNA. This is Holliday junction branch migration complex subunit RuvA from Salinispora arenicola (strain CNS-205).